The chain runs to 131 residues: MTAANQNYGTGRRKSSSARVFIKPGNGNITINQRSLEVYFGRETARMIVRQPLELVELTDKLDLYITVKGGGISGQAGAIRHGITRALIEYDETLRPALRAAGFVTRDARRVERKKVGLHKARRRPQYSKR.

Belongs to the universal ribosomal protein uS9 family.

This is Small ribosomal subunit protein uS9 from Glaesserella parasuis serovar 5 (strain SH0165) (Haemophilus parasuis).